The primary structure comprises 96 residues: SAGA complex subunit SUS1 (96 aa).

Lysine 68 is covalently cross-linked (Glycyl lysine isopeptide (Lys-Gly) (interchain with G-Cter in ubiquitin)).

This sequence belongs to the ENY2 family. As to quaternary structure, component of the 1.8 MDa SAGA (Spt-Ada-Gcn5 acetyltransferase) complex, which is composed of 19 subunits TRA1, SPT7, TAF5, NGG1/ADA3, SGF73, SPT20/ADA5, SPT8, TAF12, TAF6, HFI1/ADA1, UBP8, GCN5, ADA2, SPT3, SGF29, TAF10, TAF9, SGF11 and SUS1. The SAGA complex is composed of 4 modules, namely the HAT (histone acetyltransferase) module (GCN5, ADA2, NGG1/ADA3 and SGF29), the DUB (deubiquitinating) module (UBP8, SGF11, SGF73 and SUS1), the core or TAF (TBP-associated factor) module (TAF5, TAF6, TAF9, TAF10 and TAF12), and the Tra1 or SPT (Suppressor of Ty) module (TRA1, HFI1/ADA1, SPT3, SPT7, SPT8 and SPT20/ADA5). The Tra1/SPT module binds activators, the core module recruits TBP (TATA-binding protein), the HAT module contains the histone H3 acetyltransferase GCN5, and the DUB module comprises the histone H2B deubiquitinase UBP8. Also identified in an altered form of SAGA, named SALSA (SAGA altered, Spt8 absent) or SLIK (SAGA-like) complex, which contains a C-terminal truncated form of SPT7 and is missing SPT8. However, it has been shown that the SAGA and SAGA-like SALSA/SLIK transcriptional coactivators are structurally and biochemically equivalent. Component of the nuclear pore complex (NPC)-associated TREX-2 complex (transcription and export complex 2), composed of at least SUS1, SAC3, THP1, SEM1, and CDC31. TREX-2 contains 2 SUS1 chains. The TREX-2 complex interacts with the mRNA export factors MEX67, MTR2 and SUB2, and the nucleoporin NUP1. Interacts directly with THP1, SAC3. Interacts directly with SGF11 and UBP8. Interacts with YRA1, MEX67 and with the RNA polymerase II.

The protein resides in the nucleus. Its subcellular location is the nucleoplasm. It localises to the cytoplasm. It is found in the P-body. Functionally, involved in mRNA export coupled transcription activation by association with both the TREX-2 and the SAGA complexes. SAGA acts as a general cofactor required for essentially all RNA polymerase II transcription. At the promoters, SAGA is required for transcription pre-initiation complex (PIC) recruitment. It influences RNA polymerase II transcriptional activity through different activities such as TBP interaction (via core/TAF module) and promoter selectivity, interaction with transcription activators (via Tra1/SPT module), and chromatin modification through histone acetylation (via HAT module) and deubiquitination (via DUB module). SAGA preferentially acetylates histones H3 (to form H3K9ac, H3K14ac, H3K18ac and H3K23ac) and H2B and deubiquitinates histone H2B. SAGA interacts with DNA via upstream activating sequences (UASs). Also identified in a modified version of SAGA named SALSA or SLIK. The cleavage of SPT7 and the absence of the SPT8 subunit in SLIK neither drive any major conformational differences in its structure compared with SAGA, nor significantly affect HAT, DUB, or DNA-binding activities. Within the SAGA complex, participates in a subcomplex with SGF11, SGF73 and UBP8 required for deubiquitination of H2B and for the maintenance of steady-state H3 methylation levels. The TREX-2 complex functions in docking export-competent ribonucleoprotein particles (mRNPs) to the nuclear entrance of the nuclear pore complex (nuclear basket), by association with components of the nuclear mRNA export machinery (MEX67-MTR2 and SUB2) in the nucleoplasm and the nucleoporin NUP1 at the nuclear basket. TREX-2 participates in mRNA export and accurate chromatin positioning in the nucleus by tethering genes to the nuclear periphery. SUS1 also has a role in mRNP biogenesis and maintenance of genome integrity through preventing RNA-mediated genome instability. Has a role in response to DNA damage induced by methyl methane sulfonate (MMS) and replication arrest induced by hydroxyurea. May also be involved in cytoplasmic mRNA decay by interaction with components of P-bodies. This is SAGA complex subunit SUS1 from Saccharomyces cerevisiae (strain ATCC 204508 / S288c) (Baker's yeast).